A 539-amino-acid chain; its full sequence is MHSKILILDFGSQVTQLIARRVRDSGVFSEVYPYDVSDEFVRNYGAAGVILSGGPNSVIEGDESPRVPQAVFELGVPVLGICYGMQAMAEQLGGKVENGTVREFGYAEVRAHGHTALLKDISDFTTPEGHGMLKVWMSHGDKVNEMPPGFKLMASTPNCPIAGMADEARHMYAFQFHPEVTHTLQGKAIIARFVHDICGCKSDWNMPDYIAEAVEKIRQQVGNDEVILGLSGGVDSSVAAALIHRAIGDQLTCVFVDHGLLRLDEGKMVMEMFADHLGVNVIRIDAVDQFMGHLAGVTDPEAKRKIIGREFVEVFQVEAGKRKNAKWLAQGTIYPDVIESAGKGKKGHTIKSHHNVGGLPETLNLQLLEPLRELFKDEVRQLGVALGLPHDMVYRHPFPGPGLGVRILGEVKKDFADLLRRADAIFIEELRNTPYVLAAGASESTDNGIPHRNWYDATSQAFAVFLPVKSVGVMGDGRTYEYVVALRAVQTQDFMTAHWAHLPYELLGKVSNRIINEVRGINRVVYDISGKPPATIEWE.

The Glutamine amidotransferase type-1 domain maps to 4–203 (KILILDFGSQ…VHDICGCKSD (200 aa)). Cysteine 82 serves as the catalytic Nucleophile. Catalysis depends on residues histidine 177 and glutamate 179. The GMPS ATP-PPase domain maps to 204–395 (WNMPDYIAEA…LGLPHDMVYR (192 aa)). ATP is bound at residue 231 to 237 (SGGVDSS).

In terms of assembly, homodimer.

The enzyme catalyses XMP + L-glutamine + ATP + H2O = GMP + L-glutamate + AMP + diphosphate + 2 H(+). It functions in the pathway purine metabolism; GMP biosynthesis; GMP from XMP (L-Gln route): step 1/1. Functionally, catalyzes the synthesis of GMP from XMP. The protein is GMP synthase [glutamine-hydrolyzing] of Herminiimonas arsenicoxydans.